The sequence spans 355 residues: UDP-N-acetylglucosamine--N-acetylmuramyl-(pentapeptide) pyrophosphoryl-undecaprenol N-acetylglucosamine transferase (355 aa).

UDP-N-acetyl-alpha-D-glucosamine is bound by residues 15–17 (TGG), Asn-127, Arg-163, Ser-191, Ile-244, 263–268 (ALTVSE), and Gln-288.

This sequence belongs to the glycosyltransferase 28 family. MurG subfamily.

It is found in the cell inner membrane. The catalysed reaction is di-trans,octa-cis-undecaprenyl diphospho-N-acetyl-alpha-D-muramoyl-L-alanyl-D-glutamyl-meso-2,6-diaminopimeloyl-D-alanyl-D-alanine + UDP-N-acetyl-alpha-D-glucosamine = di-trans,octa-cis-undecaprenyl diphospho-[N-acetyl-alpha-D-glucosaminyl-(1-&gt;4)]-N-acetyl-alpha-D-muramoyl-L-alanyl-D-glutamyl-meso-2,6-diaminopimeloyl-D-alanyl-D-alanine + UDP + H(+). Its pathway is cell wall biogenesis; peptidoglycan biosynthesis. Cell wall formation. Catalyzes the transfer of a GlcNAc subunit on undecaprenyl-pyrophosphoryl-MurNAc-pentapeptide (lipid intermediate I) to form undecaprenyl-pyrophosphoryl-MurNAc-(pentapeptide)GlcNAc (lipid intermediate II). The sequence is that of UDP-N-acetylglucosamine--N-acetylmuramyl-(pentapeptide) pyrophosphoryl-undecaprenol N-acetylglucosamine transferase from Escherichia coli (strain K12 / MC4100 / BW2952).